The chain runs to 123 residues: SGSCEVKTCWWSQPDFRVIGDFLKDKYDSASEMVVEKHRESRGWVETLRPKYTFFKPPTERDLVYYESSPNFCEPNPETGSFGTRDRICNVTSHGIDGCDLLCCGRGHNTRTEKRKEKCHCIF.

Ser-1 carries O-palmitoleoyl serine lipidation. The cysteines at positions 89 and 104 are disulfide-linked. Asn-90 carries N-linked (GlcNAc...) asparagine glycosylation.

This sequence belongs to the Wnt family. In terms of processing, disulfide bonds have critical and distinct roles in secretion and activity. Loss of each conserved cysteine results in high molecular weight oxidized Wnt oligomers, which are formed through inter-Wnt disulfide bonding. Palmitoleoylation is required for efficient binding to frizzled receptors. Depalmitoleoylation leads to Wnt signaling pathway inhibition.

Its subcellular location is the secreted. It is found in the extracellular space. The protein resides in the extracellular matrix. In terms of biological role, ligand for members of the frizzled family of seven transmembrane receptors. Functions in the canonical Wnt signaling pathway that results in activation of transcription factors of the TCF/LEF family. Required for normal embryonic mesoderm development and formation of caudal somites. Required for normal morphogenesis of the developing neural tube. In Plethodon jordani (Red-cheeked salamander), this protein is Protein Wnt-3a (WNT-3A).